The sequence spans 412 residues: UPF0754 membrane protein syc0451_d (412 aa).

2 helical membrane-spanning segments follow: residues 8–28 and 390–410; these read LWLL…DLAI and IGGV…VWSL.

This sequence belongs to the UPF0754 family.

It localises to the cell inner membrane. The chain is UPF0754 membrane protein syc0451_d from Synechococcus sp. (strain ATCC 27144 / PCC 6301 / SAUG 1402/1) (Anacystis nidulans).